A 379-amino-acid polypeptide reads, in one-letter code: Protein-glutamate methylesterase/protein-glutamine glutaminase (379 aa).

The Response regulatory domain occupies 4-121; it reads KILVVDDSIF…AANRQDAVAL (118 aa). Asp-55 is subject to 4-aspartylphosphate. The CheB-type methylesterase domain maps to 186-379; it reads SGKKYRCLAI…FESHILKEMA (194 aa). Residues Ser-198, His-225, and Asp-323 contribute to the active site.

It belongs to the CheB family. Post-translationally, phosphorylated by CheA. Phosphorylation of the N-terminal regulatory domain activates the methylesterase activity.

The protein localises to the cytoplasm. It catalyses the reaction [protein]-L-glutamate 5-O-methyl ester + H2O = L-glutamyl-[protein] + methanol + H(+). It carries out the reaction L-glutaminyl-[protein] + H2O = L-glutamyl-[protein] + NH4(+). Its function is as follows. Involved in chemotaxis. Part of a chemotaxis signal transduction system that modulates chemotaxis in response to various stimuli. Catalyzes the demethylation of specific methylglutamate residues introduced into the chemoreceptors (methyl-accepting chemotaxis proteins or MCP) by CheR. Also mediates the irreversible deamidation of specific glutamine residues to glutamic acid. The protein is Protein-glutamate methylesterase/protein-glutamine glutaminase of Pseudoalteromonas atlantica (strain T6c / ATCC BAA-1087).